The sequence spans 954 residues: Glycine dehydrogenase (decarboxylating) (954 aa).

Residue Lys704 is modified to N6-(pyridoxal phosphate)lysine.

The protein belongs to the GcvP family. The glycine cleavage system is composed of four proteins: P, T, L and H. It depends on pyridoxal 5'-phosphate as a cofactor.

The enzyme catalyses N(6)-[(R)-lipoyl]-L-lysyl-[glycine-cleavage complex H protein] + glycine + H(+) = N(6)-[(R)-S(8)-aminomethyldihydrolipoyl]-L-lysyl-[glycine-cleavage complex H protein] + CO2. Functionally, the glycine cleavage system catalyzes the degradation of glycine. The P protein binds the alpha-amino group of glycine through its pyridoxal phosphate cofactor; CO(2) is released and the remaining methylamine moiety is then transferred to the lipoamide cofactor of the H protein. The polypeptide is Glycine dehydrogenase (decarboxylating) (Rhizobium johnstonii (strain DSM 114642 / LMG 32736 / 3841) (Rhizobium leguminosarum bv. viciae)).